Consider the following 754-residue polypeptide: MTISPPEREAKVKVTVDTDPVPASFEKWGQPGHFSRTLAKGPKTTTWIWNLHADAHDFDSQTSDLEDVSRKIFSAHFGHLAVIFVWLSGMYFHGARFSNYEAWLTDPTAIKPSAQVVWPIVGQGILNADVGGGFHGIQITSGLFYLWRASGFTNSYQLYCTAIGGLVMAGLMLFAGWFHYHKKAPKLEWFQNVESMMNHHLAGLLGLGSLGWAGHQIHVSLPINKLLDAGVAAKDIPLPHEFILDSSKMAELYPSFAQGLTPFFTLNWGVYSDFLTFKGGLNPVTGGLWLSDTAHHHLAIAVLFIIAGHMYRTNWGIGHSMKEILDGHKGDPLLFGGEGHTGLYEVLTTSWHAQLAINLALLGSLSIIVAHHMYAMPPYPYQAIDYGTQLSLFTHHVWIGGFLIVGAGAHGAIFMVRDYDPAKNVNNALDRVIRSRDAIISHLNWVCIFLGFHSFGLYIHNDTMRALGRPQDMFSDTAIKLQPIFAQWVQNLHFLAPGGTAPYAGAPASYAFGGETVAIAGKVAIMPIALGTADFMVHHIHAFTIHVTVLILLKGVLYARNSRLIPDKSNLGFRFPCDGPGRGGTCQVSGWDHVFLGLFWMYNSLSIVIFHFSWKMQSDVWGTVAPDGTVSHVTGGNFAQSAITINGWLRDFLWAQAANVINSYGSALSAYGIMFLAGHFVFAFSLMFLFSGRGYWQELIESIVWAHNKLKVAPAIQPRALSIIQGRAVGVAHYLLGGIVTTWAFFLARSLSIG.

8 helical membrane-spanning segments follow: residues 72–95 (IFSAHFGHLAVIFVWLSGMYFHGA), 158–181 (LYCTAIGGLVMAGLMLFAGWFHYH), 197–221 (MNHHLAGLLGLGSLGWAGHQIHVSL), 293–311 (TAHHHLAIAVLFIIAGHMY), 351–374 (WHAQLAINLALLGSLSIIVAHHMY), 390–416 (LSLFTHHVWIGGFLIVGAGAHGAIFMV), 438–460 (AIISHLNWVCIFLGFHSFGLYIH), and 535–553 (FMVHHIHAFTIHVTVLILL). Cysteine 577 and cysteine 586 together coordinate [4Fe-4S] cluster. 2 helical membrane passes run 593 to 614 (HVFLGLFWMYNSLSIVIFHFSW) and 668 to 690 (LSAYGIMFLAGHFVFAFSLMFLF). Residue histidine 679 participates in chlorophyll a' binding. Positions 687 and 695 each coordinate chlorophyll a. A phylloquinone-binding site is contributed by tryptophan 696. Residues 728–748 (AVGVAHYLLGGIVTTWAFFLA) form a helical membrane-spanning segment.

It belongs to the PsaA/PsaB family. The PsaA/B heterodimer binds the P700 chlorophyll special pair and subsequent electron acceptors. PSI consists of a core antenna complex that captures photons, and an electron transfer chain that converts photonic excitation into a charge separation. The cyanobacterial PSI reaction center is composed of one copy each of PsaA,B,C,D,E,F,I,J,K,L,M and X, and forms trimeric complexes. It depends on PSI electron transfer chain: 5 chlorophyll a, 1 chlorophyll a', 2 phylloquinones and 3 4Fe-4S clusters. PSI core antenna: 90 chlorophyll a, 22 carotenoids, 3 phospholipids and 1 galactolipid. P700 is a chlorophyll a/chlorophyll a' dimer, A0 is one or more chlorophyll a, A1 is one or both phylloquinones and FX is a shared 4Fe-4S iron-sulfur center. as a cofactor.

It is found in the cellular thylakoid membrane. It carries out the reaction reduced [plastocyanin] + hnu + oxidized [2Fe-2S]-[ferredoxin] = oxidized [plastocyanin] + reduced [2Fe-2S]-[ferredoxin]. PsaA and PsaB bind P700, the primary electron donor of photosystem I (PSI), as well as the electron acceptors A0, A1 and FX. PSI is a plastocyanin/cytochrome c6-ferredoxin oxidoreductase, converting photonic excitation into a charge separation, which transfers an electron from the donor P700 chlorophyll pair to the spectroscopically characterized acceptors A0, A1, FX, FA and FB in turn. Oxidized P700 is reduced on the lumenal side of the thylakoid membrane by plastocyanin or cytochrome c6. This chain is Photosystem I P700 chlorophyll a apoprotein A1, found in Rippkaea orientalis (strain PCC 8801 / RF-1) (Cyanothece sp. (strain PCC 8801)).